The following is a 62-amino-acid chain: Large ribosomal subunit protein bL33c (62 aa).

Belongs to the bacterial ribosomal protein bL33 family.

The protein localises to the plastid. Its subcellular location is the chloroplast. The polypeptide is Large ribosomal subunit protein bL33c (Cyanidioschyzon merolae (strain NIES-3377 / 10D) (Unicellular red alga)).